An 810-amino-acid polypeptide reads, in one-letter code: Plasminogen (810 aa).

The N-terminal stretch at 1-19 (MEHKEVVLLLLLFLKSGQG) is a signal peptide. The PAN domain occupies 20–98 (EPLDDYVNTK…RDVVLFEKKV (79 aa)). 12 cysteine pairs are disulfide-bonded: cysteine 49–cysteine 73, cysteine 53–cysteine 61, cysteine 103–cysteine 181, cysteine 124–cysteine 164, cysteine 152–cysteine 176, cysteine 185–cysteine 262, cysteine 188–cysteine 316, cysteine 206–cysteine 245, cysteine 234–cysteine 257, cysteine 275–cysteine 352, cysteine 296–cysteine 335, and cysteine 324–cysteine 347. Kringle domains are found at residues 103–181 (CKTG…IPEC), 184–262 (ECMH…IPRC), and 275–352 (CLKG…IPSC). Polar residues predominate over residues 125 to 141 (QKWSSTSPHRPTFSPAT). The disordered stretch occupies residues 125–145 (QKWSSTSPHRPTFSPATHPSE). Positions 136, 158, and 172 each coordinate L-lysine. A glycan (O-linked (GalNAc...) threonine) is linked at threonine 365. Cystine bridges form between cysteine 377/cysteine 454, cysteine 398/cysteine 437, cysteine 426/cysteine 449, cysteine 481/cysteine 560, cysteine 502/cysteine 543, cysteine 531/cysteine 555, cysteine 567/cysteine 685, cysteine 577/cysteine 585, and cysteine 607/cysteine 623. Kringle domains are found at residues 377–454 (CYHG…LKKC) and 481–560 (CMFG…VPQC). The L-lysine site is built by aspartate 432 and arginine 445. One can recognise a Peptidase S1 domain in the interval 581 to 808 (VVGGCVAYPH…FVTWIEGVMR (228 aa)). Serine 597 is subject to Phosphoserine. Catalysis depends on charge relay system residues histidine 622 and aspartate 665. At serine 688 the chain carries Phosphoserine. Cystine bridges form between cysteine 699–cysteine 766, cysteine 729–cysteine 745, and cysteine 756–cysteine 784. The Charge relay system role is filled by serine 760.

The protein belongs to the peptidase S1 family. Plasminogen subfamily. In terms of assembly, interacts with CSPG4 and AMOT. Interacts (via the Kringle domains) with HRG; the interaction tethers PLG to the cell surface and enhances its activation. Interacts (via Kringle 4 domain) with ADA; the interaction stimulates PLG activation when in complex with DPP4. Angiostatin: Interacts with ATP5F1A; the interaction inhibits most of the angiogenic effects of angiostatin. Post-translationally, in the presence of the inhibitor, the activation involves only cleavage after Arg-580, yielding two chains held together by two disulfide bonds. In the absence of the inhibitor, the activation involves additionally the removal of the activation peptide.

It localises to the secreted. It carries out the reaction Preferential cleavage: Lys-|-Xaa &gt; Arg-|-Xaa, higher selectivity than trypsin. Converts fibrin into soluble products.. Converted into plasmin by plasminogen activators, both plasminogen and its activator being bound to fibrin. Activated with catalytic amounts of streptokinase. In terms of biological role, plasmin dissolves the fibrin of blood clots and acts as a proteolytic factor in a variety of other processes including embryonic development, tissue remodeling, tumor invasion, and inflammation. In ovulation, weakens the walls of the Graafian follicle. It activates the urokinase-type plasminogen activator, collagenases and several complement zymogens, such as C1, C4 and C5. Cleavage of fibronectin and laminin leads to cell detachment and apoptosis. Also cleaves fibrin, thrombospondin and von Willebrand factor. Its role in tissue remodeling and tumor invasion may be modulated by CSPG4. Binds to cells. The chain is Plasminogen (PLG) from Macaca mulatta (Rhesus macaque).